The sequence spans 247 residues: Probable 2-phosphosulfolactate phosphatase (247 aa).

This sequence belongs to the ComB family. Requires Mg(2+) as cofactor.

It catalyses the reaction (2R)-O-phospho-3-sulfolactate + H2O = (2R)-3-sulfolactate + phosphate. The sequence is that of Probable 2-phosphosulfolactate phosphatase from Clostridium perfringens (strain 13 / Type A).